We begin with the raw amino-acid sequence, 140 residues long: MACTLRLTIAALVLLGICHLSRPVAAYQRCSRYWYSWLPYDIERDRYDDGYRKCCYCRNAWTPWQCREDEQFERMRCGSRYYTLCCYTDDDNGNGNGNGNGYGNGNGNGNGNNYLKYLFGGNGNGNGEYWEEYIDERYDK.

The signal sequence occupies residues 1–25 (MACTLRLTIAALVLLGICHLSRPVA).

It belongs to the N16 matrix protein family. In terms of assembly, heterooligomer; disulfide-linked. Pif97, Pif80, N16 and other proteins form a complex. In terms of tissue distribution, component of conchiolin, the organic matrix of nacre. Only expressed in the dorsal region of the mantle.

The protein resides in the secreted. It localises to the extracellular space. Its subcellular location is the extracellular matrix. In terms of biological role, may be specifically involved in the formation of the nacreous layer. This is N14 matrix protein from Pinctada maxima (Silver-lipped pearl oyster).